Reading from the N-terminus, the 620-residue chain is 1-deoxy-D-xylulose-5-phosphate synthase (620 aa).

Thiamine diphosphate is bound by residues His-80 and 121-123 (GHS). Asp-152 contacts Mg(2+). Thiamine diphosphate-binding positions include 153–154 (GA), Asn-181, Tyr-288, and Glu-370. Position 181 (Asn-181) interacts with Mg(2+).

Belongs to the transketolase family. DXPS subfamily. Homodimer. The cofactor is Mg(2+). Thiamine diphosphate is required as a cofactor.

The enzyme catalyses D-glyceraldehyde 3-phosphate + pyruvate + H(+) = 1-deoxy-D-xylulose 5-phosphate + CO2. It functions in the pathway metabolic intermediate biosynthesis; 1-deoxy-D-xylulose 5-phosphate biosynthesis; 1-deoxy-D-xylulose 5-phosphate from D-glyceraldehyde 3-phosphate and pyruvate: step 1/1. Its function is as follows. Catalyzes the acyloin condensation reaction between C atoms 2 and 3 of pyruvate and glyceraldehyde 3-phosphate to yield 1-deoxy-D-xylulose-5-phosphate (DXP). This chain is 1-deoxy-D-xylulose-5-phosphate synthase, found in Enterobacter sp. (strain 638).